The chain runs to 363 residues: Probable methyltransferase-like protein 24 (363 aa).

Residues 1–38 form the signal peptide; sequence MGTAKPPGRGCGALPRWLLGAALLLGLRLCMELRHAGS. Residues 37-62 are disordered; sequence GSGPPGRRDLRGPPRTHLLPAPGPLR.

It belongs to the methyltransferase superfamily.

It is found in the secreted. In terms of biological role, probable methyltransferase. The chain is Probable methyltransferase-like protein 24 (Mettl24) from Rattus norvegicus (Rat).